The sequence spans 155 residues: uncharacterized protein (155 aa).

The first 23 residues, 1 to 23 (MRLMRNLMNALLLGAAASSLAVA), serve as a signal peptide directing secretion. A disulfide bond links Cys86 and Cys91.

The protein belongs to the ivy family.

The protein localises to the periplasm. This is an uncharacterized protein from Pseudomonas aeruginosa (strain ATCC 15692 / DSM 22644 / CIP 104116 / JCM 14847 / LMG 12228 / 1C / PRS 101 / PAO1).